Reading from the N-terminus, the 800-residue chain is Phenylalanine--tRNA ligase beta subunit (800 aa).

The tRNA-binding domain maps to 38-147; the sequence is GAELKGVVAA…PGTVPGTPIG (110 aa). Residues 401–477 form the B5 domain; it reads VASPEVRMRW…RTLGYDAIPE (77 aa). Mg(2+) contacts are provided by D455, D461, E464, and E465. The region spanning 708–799 is the FDX-ACB domain; the sequence is PRLPAVLRDV…LRERVGAELR (92 aa).

Belongs to the phenylalanyl-tRNA synthetase beta subunit family. Type 1 subfamily. Tetramer of two alpha and two beta subunits. Mg(2+) serves as cofactor.

It localises to the cytoplasm. The enzyme catalyses tRNA(Phe) + L-phenylalanine + ATP = L-phenylalanyl-tRNA(Phe) + AMP + diphosphate + H(+). This chain is Phenylalanine--tRNA ligase beta subunit, found in Anaeromyxobacter dehalogenans (strain 2CP-C).